The sequence spans 161 residues: Putative 4-hydroxy-4-methyl-2-oxoglutarate aldolase (161 aa).

Residues Gly-75–Leu-78 and Arg-97 each bind substrate. Asp-98 contributes to the a divalent metal cation binding site.

It belongs to the class II aldolase/RraA-like family. Homotrimer. A divalent metal cation serves as cofactor.

It catalyses the reaction 4-hydroxy-4-methyl-2-oxoglutarate = 2 pyruvate. It carries out the reaction oxaloacetate + H(+) = pyruvate + CO2. Its function is as follows. Catalyzes the aldol cleavage of 4-hydroxy-4-methyl-2-oxoglutarate (HMG) into 2 molecules of pyruvate. Also contains a secondary oxaloacetate (OAA) decarboxylase activity due to the common pyruvate enolate transition state formed following C-C bond cleavage in the retro-aldol and decarboxylation reactions. This Vibrio cholerae serotype O1 (strain ATCC 39315 / El Tor Inaba N16961) protein is Putative 4-hydroxy-4-methyl-2-oxoglutarate aldolase.